The primary structure comprises 115 residues: Small ribosomal subunit protein bS6 (115 aa).

The protein belongs to the bacterial ribosomal protein bS6 family.

Functionally, binds together with bS18 to 16S ribosomal RNA. The protein is Small ribosomal subunit protein bS6 of Syntrophotalea carbinolica (strain DSM 2380 / NBRC 103641 / GraBd1) (Pelobacter carbinolicus).